A 485-amino-acid chain; its full sequence is NADH-quinone oxidoreductase subunit N (485 aa).

14 consecutive transmembrane segments (helical) span residues 8 to 28, 35 to 55, 75 to 95, 105 to 125, 127 to 147, 159 to 179, 203 to 223, 235 to 255, 271 to 291, 297 to 317, 326 to 346, 374 to 394, 407 to 426, and 449 to 469; these read LIAL…MLCI, FVNA…LYFV, FYTG…YPWL, FYLL…ANHL, SLFI…GYAF, YMLL…LIYA, LLAG…LVPF, PAPV…GAVM, IVLG…AVSQ, LLGY…IAVQ, VGVY…VVSL, AVMT…GFFG, LWWL…YYYL, and ALTA…FFGL.

It belongs to the complex I subunit 2 family. NDH-1 is composed of 13 different subunits. Subunits NuoA, H, J, K, L, M, N constitute the membrane sector of the complex.

It localises to the cell inner membrane. It carries out the reaction a quinone + NADH + 5 H(+)(in) = a quinol + NAD(+) + 4 H(+)(out). Functionally, NDH-1 shuttles electrons from NADH, via FMN and iron-sulfur (Fe-S) centers, to quinones in the respiratory chain. The immediate electron acceptor for the enzyme in this species is believed to be ubiquinone. Couples the redox reaction to proton translocation (for every two electrons transferred, four hydrogen ions are translocated across the cytoplasmic membrane), and thus conserves the redox energy in a proton gradient. This Pectobacterium carotovorum subsp. carotovorum (strain PC1) protein is NADH-quinone oxidoreductase subunit N.